A 223-amino-acid chain; its full sequence is Glutelin-2 (223 aa).

A signal peptide spans 1–19 (MRVLLVALALLALAASATS). 10 repeat units span residues 31 to 36 (PPPVHL), 37 to 42 (PPPVHL), 43 to 48 (PPPVHL), 49 to 54 (PPPVHL), 55 to 60 (PPPVHL), 61 to 66 (PPPVHL), 67 to 72 (PPPVHV), 73 to 78 (PPPVHL), 97 to 104 (QPHPCPCQ), and 105 to 112 (QPHPSPCQ). The tract at residues 31-78 (PPPVHLPPPVHLPPPVHLPPPVHLPPPVHLPPPVHLPPPVHVPPPVHL) is 8 X 6 AA tandem repeats of P-P-P-V-H-L. The 2 X 8 AA tandem repeats of Q-P-H-P-C-P-C-Q stretch occupies residues 97 to 112 (QPHPCPCQQPHPSPCQ).

It belongs to the gliadin/glutenin family.

It is found in the vacuole. The protein resides in the aleurone grain membrane. In terms of biological role, seed storage protein. It accounts for about 15% of the total endosperm protein content. This is Glutelin-2 from Zea mays (Maize).